We begin with the raw amino-acid sequence, 110 residues long: Large ribosomal subunit protein uL22 (110 aa).

The protein belongs to the universal ribosomal protein uL22 family. Part of the 50S ribosomal subunit.

This protein binds specifically to 23S rRNA; its binding is stimulated by other ribosomal proteins, e.g. L4, L17, and L20. It is important during the early stages of 50S assembly. It makes multiple contacts with different domains of the 23S rRNA in the assembled 50S subunit and ribosome. In terms of biological role, the globular domain of the protein is located near the polypeptide exit tunnel on the outside of the subunit, while an extended beta-hairpin is found that lines the wall of the exit tunnel in the center of the 70S ribosome. This is Large ribosomal subunit protein uL22 from Alkaliphilus metalliredigens (strain QYMF).